Reading from the N-terminus, the 90-residue chain is UDP-N-acetylglucosamine 1-carboxyvinyltransferase (90 aa).

This sequence belongs to the EPSP synthase family. MurA subfamily.

The protein localises to the cytoplasm. The enzyme catalyses phosphoenolpyruvate + UDP-N-acetyl-alpha-D-glucosamine = UDP-N-acetyl-3-O-(1-carboxyvinyl)-alpha-D-glucosamine + phosphate. Its pathway is cell wall biogenesis; peptidoglycan biosynthesis. Cell wall formation. Adds enolpyruvyl to UDP-N-acetylglucosamine. The sequence is that of UDP-N-acetylglucosamine 1-carboxyvinyltransferase (murA) from Mycobacteroides chelonae (Mycobacterium chelonae).